A 156-amino-acid chain; its full sequence is Arginine repressor (156 aa).

It belongs to the ArgR family.

The protein resides in the cytoplasm. Its pathway is amino-acid biosynthesis; L-arginine biosynthesis [regulation]. Its function is as follows. Regulates arginine biosynthesis genes. This Shewanella sp. (strain ANA-3) protein is Arginine repressor.